A 213-amino-acid polypeptide reads, in one-letter code: MDWKKEFIDFSFKKKVLKFGVFQLKSGRISPYFFNSGLLSTGIDIIKIGLFYARSIIDSKNKFDVLFGPAYKGIPIAVATSIALKNHYNLNVPYSFNRKEYKEHGEKGDLIGSTIYKKRVIILDDVITSGTAIHHSIKIIEKQEASISSIFVLLDRKEKGIRKLSTINHFRNQKSYKIISIITIDDLIEYVLEDKKLKEHIPQLIKYREKYGI.

5-phospho-alpha-D-ribose 1-diphosphate is bound at residue Lys25. 33-34 (FF) contacts orotate. 5-phospho-alpha-D-ribose 1-diphosphate-binding positions include 71-72 (YK), Arg98, Lys99, Lys102, His104, and 124-132 (DDVITSGTA). 2 residues coordinate orotate: Thr128 and Arg156.

The protein belongs to the purine/pyrimidine phosphoribosyltransferase family. PyrE subfamily. As to quaternary structure, homodimer. It depends on Mg(2+) as a cofactor.

It carries out the reaction orotidine 5'-phosphate + diphosphate = orotate + 5-phospho-alpha-D-ribose 1-diphosphate. Its pathway is pyrimidine metabolism; UMP biosynthesis via de novo pathway; UMP from orotate: step 1/2. Catalyzes the transfer of a ribosyl phosphate group from 5-phosphoribose 1-diphosphate to orotate, leading to the formation of orotidine monophosphate (OMP). This Buchnera aphidicola subsp. Acyrthosiphon pisum (strain 5A) protein is Orotate phosphoribosyltransferase.